The chain runs to 620 residues: Dopamine beta-hydroxylase (620 aa).

Residues 1 to 19 lie on the Cytoplasmic side of the membrane; that stretch reads MQPHLSHQPCWSLPSPSVR. A helical; Signal-anchor for type II membrane protein transmembrane segment spans residues 20–40; that stretch reads EAASMYGTAVAIFLVILVAAL. Residues 41-620 are Intragranular-facing; the sequence is QGSEPPESPF…FVVITHGGRH (580 aa). A DOMON domain is found at 60 to 176; the sequence is GTLELSWNVS…DTVHLVYGIL (117 aa). N-linked (GlcNAc...) asparagine glycans are attached at residues asparagine 67 and asparagine 187. Intrachain disulfides connect cysteine 157–cysteine 599, cysteine 235–cysteine 286, cysteine 272–cysteine 298, cysteine 393–cysteine 506, cysteine 397–cysteine 568, and cysteine 469–cysteine 491. Tyrosine 233 is a catalytic residue. 2 residues coordinate Cu(2+): histidine 265 and histidine 266. Asparagine 274 carries an N-linked (GlcNAc...) asparagine glycan. Residue histidine 336 coordinates Cu(2+). The residue at position 349 (serine 349) is a Phosphoserine; by CaMK. Residue histidine 415 is part of the active site. Cu(2+) is bound by residues histidine 415 and histidine 417. Asparagine 475 carries N-linked (GlcNAc...) asparagine glycosylation. Cu(2+) is bound at residue methionine 490. N-linked (GlcNAc...) asparagine glycans are attached at residues asparagine 569 and asparagine 587.

It belongs to the copper type II ascorbate-dependent monooxygenase family. Homotetramer; composed of two disulfide-linked dimers. Requires Cu(2+) as cofactor. In terms of processing, proteolytic cleavage after the membrane-anchor leads to the release of the soluble form. Post-translationally, N-glycosylated. In terms of tissue distribution, chromaffin granules of the adrenal medulla and synaptic vesicles of the sympathetic nervous system.

It localises to the cytoplasmic vesicle. The protein resides in the secretory vesicle lumen. The protein localises to the secretory vesicle. It is found in the chromaffin granule lumen. Its subcellular location is the secreted. It localises to the secretory vesicle membrane. The protein resides in the chromaffin granule membrane. The catalysed reaction is dopamine + 2 L-ascorbate + O2 = (R)-noradrenaline + 2 monodehydro-L-ascorbate radical + H2O. The protein operates within catecholamine biosynthesis; (R)-noradrenaline biosynthesis; (R)-noradrenaline from dopamine: step 1/1. Catalyzes the hydroxylation of dopamine to noradrenaline (also known as norepinephrine), and is thus vital for regulation of these neurotransmitters. The protein is Dopamine beta-hydroxylase (Dbh) of Rattus norvegicus (Rat).